Reading from the N-terminus, the 181-residue chain is Small ribosomal subunit protein uS4 (181 aa).

An S4 RNA-binding domain is found at 108 to 172 (RRLQTQVYRR…SPLVSDIHSE (65 aa)).

It belongs to the universal ribosomal protein uS4 family. Part of the 30S ribosomal subunit. Contacts protein S5. The interaction surface between S4 and S5 is involved in control of translational fidelity.

Functionally, one of the primary rRNA binding proteins, it binds directly to 16S rRNA where it nucleates assembly of the body of the 30S subunit. With S5 and S12 plays an important role in translational accuracy. This is Small ribosomal subunit protein uS4 from Methanospirillum hungatei JF-1 (strain ATCC 27890 / DSM 864 / NBRC 100397 / JF-1).